Here is a 241-residue protein sequence, read N- to C-terminus: PHD finger protein ALFIN-LIKE 1 (241 aa).

Position 2 is an N-acetylalanine (A2). The tract at residues 142–182 (DGKPSMDLGSKSRNGVKRSIEGQTKSTPKLMEESYEDEDDE) is disordered. The PHD-type zinc-finger motif lies at 185–237 (DTLCGSCGGNYTNDEFWICCDVCERWYHGKCVKITPAKAESIKQYKCPSCCTK).

This sequence belongs to the Alfin family. Interacts with H3K4me3 and to a lesser extent with H3K4me2. As to expression, ubiquitously expressed.

It localises to the nucleus. Functionally, histone-binding component that specifically recognizes H3 tails trimethylated on 'Lys-4' (H3K4me3), which mark transcription start sites of virtually all active genes. The protein is PHD finger protein ALFIN-LIKE 1 (AL1) of Arabidopsis thaliana (Mouse-ear cress).